The sequence spans 440 residues: MSFRSIVRDVRDGFGSLSRRGFEVRILGHRRGKSHGAVHELHDPVPVIQSSCWASLPPELLRDIIERLEESEATWPSRKHVVACAGVCRTWREMCKEIVKNPELCGKITFPISLRQPGPRDGTMQCFIRRDKSTQTYYLYLSLGSAVLVDNGKFLLSAKRNWHATCTEYVISMNANNLSRSTNTNIGKLRSNFLGTKFVIYDTHTPYNATSDSQSGKTSRRFSNKGTAKHPCSTYSIANISYELNVFGTRGPRRMCCLMHSIPASSLEAGGTVPSQPDSILAHSLNESSFRSVSFSKSSVMDHSMHFSSAQFSDISIGDGPRIGGRVLSDDEECKETPLILQNKAPRWHEQLQCWCLNFRGRVTVASVKNFQLIAATQPAAGAPTPSQPVPPPPPEHDKVILQFGKVAKDMFTMDYHYPLSAFQAFAISLSSFDTKLACE.

The region spanning 51–106 (SCWASLPPELLRDIIERLEESEATWPSRKHVVACAGVCRTWREMCKEIVKNPELCG) is the F-box domain.

Belongs to the TUB family. In terms of tissue distribution, ubiquitous.

This Oryza sativa subsp. japonica (Rice) protein is Tubby-like F-box protein 13 (TULP13).